The primary structure comprises 2345 residues: Nonribisomal peptide synthetase malG (2345 aa).

Positions 226-620 are adenylation 1; the sequence is FSEQAKKNPT…VGRMGTVVKV (395 aa). Residues 766–839 enclose the Carrier 1 domain; that stretch reads TENETLLRLL…EAAGTMISAG (74 aa). An O-(pantetheine 4'-phosphoryl)serine modification is found at Ser-800. Residues 877–1292 form a condensation 1 region; it reads EEIYPSTPLQ…LLCPSDKSKL (416 aa). An adenylation 2 region spans residues 1317 to 1707; it reads VRSERTAVSA…GRKNREVKLR (391 aa). Residues 1843–1926 form the Carrier 2 domain; the sequence is QPHESTALFV…DIARLIEGVK (84 aa). Ser-1885 is modified (O-(pantetheine 4'-phosphoryl)serine). The segment at 1969-2256 is reductase (R) domain; that stretch reads GMSVFLTGGT…PRQLNALQSE (288 aa).

This sequence belongs to the NRP synthetase family.

The enzyme catalyses L-proline + L-tryptophan + 2 ATP + NADPH = (S)-3-(indol-3-ylmethyl)-6,7,8,8a-tetrahydropyrrolo[1,2-a]pyrazin-1-one + 2 AMP + 2 diphosphate + NADP(+) + H2O + H(+). Functionally, nonribisomal peptide synthetase; part of the gene cluster that mediates the biosynthesis of malbrancheamide, a dichlorinated fungal indole alkaloid that belongs to a family of natural products containing a characteristic bicyclo[2.2.2]diazaoctane core. The first step of malbrancheamide biosynthesis involves coupling of L-proline and L-tryptophan by malG, a bimodular NRPS, to produce L-Pro-L-Trp aldehyde through reductive offloading. This compound undergoes spontaneous cyclization and dehydration to give a dienamine which is reverse prenylated at C-2 by malE. The other prenyltransferase present in the cluster, malB, displays modest activity, suggesting that may be a redundant gene in the pathway. Subsequently, a [4+2] Diels-Alder cyclo-addition catalyzed by the bifunctional enzyme malC forms the characteristic bicyclo[2.2.2]diazaoctane ring of premalbrancheamid. Finally, the flavin-dependent halogenase malA catalyzes the iterative dichlorination of the indole ring of premalbrancheamide to yield C-9 monochlorinated malbrancheamide B, C-8 monochlorinated isomalbrancheamide B, and dichlorinated malbrancheamide. MalA is also able to brominate premalbrancheamide at C-9 to yield malbrancheamide C, and, to a lesser extend, at C-8 to yield isomalbrancheamide C. Finally, malA can brominate C-9 monochlorinated malbrancheamide B at C-8 to yield malbrancheamide D, or C-8 monochlorinated isomalbrancheamide B at C-9 to produce isomalbrancheamide D. This Malbranchea aurantiaca protein is Nonribisomal peptide synthetase malG.